Reading from the N-terminus, the 101-residue chain is Small ribosomal subunit protein uS14 (101 aa).

It belongs to the universal ribosomal protein uS14 family. Part of the 30S ribosomal subunit. Contacts proteins S3 and S10.

In terms of biological role, binds 16S rRNA, required for the assembly of 30S particles and may also be responsible for determining the conformation of the 16S rRNA at the A site. The chain is Small ribosomal subunit protein uS14 from Actinobacillus pleuropneumoniae serotype 5b (strain L20).